Reading from the N-terminus, the 184-residue chain is ATP synthase subunit b 1 (184 aa).

The helical transmembrane segment at 4-24 (LSILAVLAASPAMAATGPFLS) threads the bilayer.

It belongs to the ATPase B chain family. In terms of assembly, F-type ATPases have 2 components, F(1) - the catalytic core - and F(0) - the membrane proton channel. F(1) has five subunits: alpha(3), beta(3), gamma(1), delta(1), epsilon(1). F(0) has three main subunits: a(1), b(2) and c(10-14). The alpha and beta chains form an alternating ring which encloses part of the gamma chain. F(1) is attached to F(0) by a central stalk formed by the gamma and epsilon chains, while a peripheral stalk is formed by the delta and b chains.

The protein localises to the cell inner membrane. Functionally, f(1)F(0) ATP synthase produces ATP from ADP in the presence of a proton or sodium gradient. F-type ATPases consist of two structural domains, F(1) containing the extramembraneous catalytic core and F(0) containing the membrane proton channel, linked together by a central stalk and a peripheral stalk. During catalysis, ATP synthesis in the catalytic domain of F(1) is coupled via a rotary mechanism of the central stalk subunits to proton translocation. Its function is as follows. Component of the F(0) channel, it forms part of the peripheral stalk, linking F(1) to F(0). This Cereibacter sphaeroides (strain ATCC 17023 / DSM 158 / JCM 6121 / CCUG 31486 / LMG 2827 / NBRC 12203 / NCIMB 8253 / ATH 2.4.1.) (Rhodobacter sphaeroides) protein is ATP synthase subunit b 1.